A 142-amino-acid chain; its full sequence is Large ribosomal subunit protein uL13 (142 aa).

This sequence belongs to the universal ribosomal protein uL13 family. As to quaternary structure, part of the 50S ribosomal subunit.

This protein is one of the early assembly proteins of the 50S ribosomal subunit, although it is not seen to bind rRNA by itself. It is important during the early stages of 50S assembly. The chain is Large ribosomal subunit protein uL13 from Methanosphaera stadtmanae (strain ATCC 43021 / DSM 3091 / JCM 11832 / MCB-3).